A 468-amino-acid chain; its full sequence is Adenylosuccinate synthetase (468 aa).

GTP is bound by residues 23–29 (GDEGKGK) and 51–53 (GHE). Asp-24 (proton acceptor) is an active-site residue. Mg(2+) is bound by residues Asp-24 and Gly-51. IMP is bound by residues 24-27 (DEGK), 49-52 (NSGH), Thr-142, Arg-156, Asn-238, Thr-253, and Arg-317. His-52 serves as the catalytic Proton donor. 313–319 (VTTGRTR) lines the substrate pocket. GTP-binding positions include Arg-319 and 345 to 347 (KLD).

This sequence belongs to the adenylosuccinate synthetase family. Homodimer. The cofactor is Mg(2+).

The protein localises to the cytoplasm. The catalysed reaction is IMP + L-aspartate + GTP = N(6)-(1,2-dicarboxyethyl)-AMP + GDP + phosphate + 2 H(+). Its pathway is purine metabolism; AMP biosynthesis via de novo pathway; AMP from IMP: step 1/2. Functionally, plays an important role in the salvage pathway for purine nucleotide biosynthesis. Catalyzes the first committed step in the biosynthesis of AMP from IMP. This chain is Adenylosuccinate synthetase, found in Theileria annulata.